The sequence spans 157 residues: Endoribonuclease YbeY (157 aa).

Residues histidine 114, histidine 118, and histidine 124 each coordinate Zn(2+).

It belongs to the endoribonuclease YbeY family. Requires Zn(2+) as cofactor.

The protein resides in the cytoplasm. Functionally, single strand-specific metallo-endoribonuclease involved in late-stage 70S ribosome quality control and in maturation of the 3' terminus of the 16S rRNA. The chain is Endoribonuclease YbeY from Salmonella dublin (strain CT_02021853).